The sequence spans 486 residues: Bifunctional protein GlmU (486 aa).

A pyrophosphorylase region spans residues 1 to 236 (MTDQNLAIVV…SWLVDGINDR (236 aa)). Residues 11 to 14 (LAAG), K25, Q78, and 83 to 84 (GT) contribute to the UDP-N-acetyl-alpha-D-glucosamine site. Mg(2+) is bound at residue D109. Residues G146, E161, N176, and N234 each coordinate UDP-N-acetyl-alpha-D-glucosamine. N234 provides a ligand contact to Mg(2+). Positions 237–257 (AQLSEAAAKLNALTVRAWQLA) are linker. Residues 258–486 (GVTVQDPATT…ASNAAEESGE (229 aa)) form an N-acetyltransferase region. Residues R339 and K357 each coordinate UDP-N-acetyl-alpha-D-glucosamine. H369 (proton acceptor) is an active-site residue. UDP-N-acetyl-alpha-D-glucosamine contacts are provided by Y372 and N383. Residues A386, 392–393 (NY), and A429 contribute to the acetyl-CoA site. The segment at 459-486 (RRPGTDAARAAQRNGAAEASNAAEESGE) is disordered. Residues 465–486 (AARAAQRNGAAEASNAAEESGE) are compositionally biased toward low complexity.

The protein in the N-terminal section; belongs to the N-acetylglucosamine-1-phosphate uridyltransferase family. In the C-terminal section; belongs to the transferase hexapeptide repeat family. In terms of assembly, homotrimer. Requires Mg(2+) as cofactor.

The protein resides in the cytoplasm. The catalysed reaction is alpha-D-glucosamine 1-phosphate + acetyl-CoA = N-acetyl-alpha-D-glucosamine 1-phosphate + CoA + H(+). The enzyme catalyses N-acetyl-alpha-D-glucosamine 1-phosphate + UTP + H(+) = UDP-N-acetyl-alpha-D-glucosamine + diphosphate. It participates in nucleotide-sugar biosynthesis; UDP-N-acetyl-alpha-D-glucosamine biosynthesis; N-acetyl-alpha-D-glucosamine 1-phosphate from alpha-D-glucosamine 6-phosphate (route II): step 2/2. The protein operates within nucleotide-sugar biosynthesis; UDP-N-acetyl-alpha-D-glucosamine biosynthesis; UDP-N-acetyl-alpha-D-glucosamine from N-acetyl-alpha-D-glucosamine 1-phosphate: step 1/1. It functions in the pathway bacterial outer membrane biogenesis; LPS lipid A biosynthesis. Catalyzes the last two sequential reactions in the de novo biosynthetic pathway for UDP-N-acetylglucosamine (UDP-GlcNAc). The C-terminal domain catalyzes the transfer of acetyl group from acetyl coenzyme A to glucosamine-1-phosphate (GlcN-1-P) to produce N-acetylglucosamine-1-phosphate (GlcNAc-1-P), which is converted into UDP-GlcNAc by the transfer of uridine 5-monophosphate (from uridine 5-triphosphate), a reaction catalyzed by the N-terminal domain. This Leifsonia xyli subsp. xyli (strain CTCB07) protein is Bifunctional protein GlmU.